The following is a 497-amino-acid chain: Probable malate:quinone oxidoreductase (497 aa).

Belongs to the MQO family. FAD serves as cofactor.

It catalyses the reaction (S)-malate + a quinone = a quinol + oxaloacetate. The protein operates within carbohydrate metabolism; tricarboxylic acid cycle; oxaloacetate from (S)-malate (quinone route): step 1/1. In Prochlorococcus marinus (strain MIT 9515), this protein is Probable malate:quinone oxidoreductase.